The primary structure comprises 849 residues: Aminopeptidase N (849 aa).

Substrate-binding positions include Glu-122 and 259–263 (GAMEN). His-294 provides a ligand contact to Zn(2+). Catalysis depends on Glu-295, which acts as the Proton acceptor. The Zn(2+) site is built by His-298 and Glu-317.

The protein belongs to the peptidase M1 family. In terms of assembly, monomer. Zn(2+) serves as cofactor.

Its subcellular location is the cytoplasm. It catalyses the reaction Release of an N-terminal amino acid, Xaa-|-Yaa- from a peptide, amide or arylamide. Xaa is preferably Ala, but may be most amino acids including Pro (slow action). When a terminal hydrophobic residue is followed by a prolyl residue, the two may be released as an intact Xaa-Pro dipeptide.. Aminopeptidase with broad substrate specificity to several peptides. It has more affinity for oligopeptides than for dipeptides. It plays an essential role in the metabolism, it may be involved in nitrogen supply or protein turnover. This Lactococcus lactis subsp. lactis (Streptococcus lactis) protein is Aminopeptidase N (pepN).